We begin with the raw amino-acid sequence, 159 residues long: Large ribosomal subunit protein uL11 (159 aa).

This sequence belongs to the universal ribosomal protein uL11 family. Part of the ribosomal stalk of the 50S ribosomal subunit. Interacts with L10 and the large rRNA to form the base of the stalk. L10 forms an elongated spine to which L12 dimers bind in a sequential fashion forming a multimeric L10(L12)X complex.

Forms part of the ribosomal stalk which helps the ribosome interact with GTP-bound translation factors. In Methanococcus maripaludis (strain DSM 14266 / JCM 13030 / NBRC 101832 / S2 / LL), this protein is Large ribosomal subunit protein uL11.